Here is a 125-residue protein sequence, read N- to C-terminus: Small ribosomal subunit protein uS13 (125 aa).

The tract at residues 101–125 (QRTKTNARTRKGKRKTVANKKIAAK) is disordered.

Belongs to the universal ribosomal protein uS13 family. As to quaternary structure, part of the 30S ribosomal subunit. Forms a loose heterodimer with protein S19. Forms two bridges to the 50S subunit in the 70S ribosome.

Its function is as follows. Located at the top of the head of the 30S subunit, it contacts several helices of the 16S rRNA. In the 70S ribosome it contacts the 23S rRNA (bridge B1a) and protein L5 of the 50S subunit (bridge B1b), connecting the 2 subunits; these bridges are implicated in subunit movement. Contacts the tRNAs in the A and P-sites. The sequence is that of Small ribosomal subunit protein uS13 from Borrelia duttonii (strain Ly).